A 348-amino-acid chain; its full sequence is Bifunctional dihydroflavonol 4-reductase/flavanone 4-reductase (348 aa).

The NADP(+) site is built by K44 and Y163.

Belongs to the NAD(P)-dependent epimerase/dehydratase family. Dihydroflavonol-4-reductase subfamily.

It catalyses the reaction a (2R,3S,4S)-leucoanthocyanidin + NADP(+) = a (2R,3R)-dihydroflavonol + NADPH + H(+). The enzyme catalyses (2S)-flavan-4-ol + NADP(+) = (2S)-flavanone + NADPH + H(+). In terms of biological role, bifunctional enzyme involved in flavonoid metabolism. May use dihydroquercetin, dihydrokaempferol, eriodictyol, garbanzol (5-deoxydihydrokaempferol), dihydrofisetin (5-deoxydihydroquercetin), naringenin to a low extent (10%), but not 5-deoxynaringenin or butin (5-deoxyeriodictyol) as substrate. The sequence is that of Bifunctional dihydroflavonol 4-reductase/flavanone 4-reductase (DFR) from Malus domestica (Apple).